The primary structure comprises 163 residues: Peptidyl-prolyl cis-trans isomerase FKBP15-2 (163 aa).

A signal peptide spans 1–25 (MASKMSLRYSLFLIFFSLISLQGFA). Residues 52–140 (GDTIKVHYRG…IFDTELIAVN (89 aa)) form the PPIase FKBP-type domain. The tract at residues 142-163 (KPAGGEEYGGDEDDEGYGNDEL) is disordered. Acidic residues predominate over residues 149-163 (YGGDEDDEGYGNDEL). A Prevents secretion from ER motif is present at residues 160–163 (NDEL).

It belongs to the FKBP-type PPIase family.

It is found in the endoplasmic reticulum lumen. It carries out the reaction [protein]-peptidylproline (omega=180) = [protein]-peptidylproline (omega=0). PPIases accelerate the folding of proteins. It catalyzes the cis-trans isomerization of proline imidic peptide bonds in oligopeptides. The chain is Peptidyl-prolyl cis-trans isomerase FKBP15-2 (FKBP15-2) from Arabidopsis thaliana (Mouse-ear cress).